A 193-amino-acid polypeptide reads, in one-letter code: Thymidylate kinase (193 aa).

7–14 contributes to the ATP binding site; the sequence is GIDGCGKS.

This sequence belongs to the thymidylate kinase family.

It carries out the reaction dTMP + ATP = dTDP + ADP. Functionally, phosphorylation of dTMP to form dTDP in both de novo and salvage pathways of dTTP synthesis. This Coprothermobacter proteolyticus (strain ATCC 35245 / DSM 5265 / OCM 4 / BT) protein is Thymidylate kinase.